The primary structure comprises 133 residues: Nickel-responsive regulator (133 aa).

Ni(2+) is bound by residues His-76, His-87, His-89, and Cys-95.

The protein belongs to the transcriptional regulatory CopG/NikR family. As to quaternary structure, homotetramer. Ni(2+) serves as cofactor.

In terms of biological role, transcriptional repressor of the nikABCDE operon. Is active in the presence of excessive concentrations of intracellular nickel. The polypeptide is Nickel-responsive regulator (Escherichia coli O6:K15:H31 (strain 536 / UPEC)).